Reading from the N-terminus, the 254-residue chain is Indole-3-glycerol phosphate synthase (254 aa).

Belongs to the TrpC family.

It catalyses the reaction 1-(2-carboxyphenylamino)-1-deoxy-D-ribulose 5-phosphate + H(+) = (1S,2R)-1-C-(indol-3-yl)glycerol 3-phosphate + CO2 + H2O. Its pathway is amino-acid biosynthesis; L-tryptophan biosynthesis; L-tryptophan from chorismate: step 4/5. In Methanopyrus kandleri (strain AV19 / DSM 6324 / JCM 9639 / NBRC 100938), this protein is Indole-3-glycerol phosphate synthase.